The chain runs to 216 residues: Putative transmembrane protein RNF32-DT (216 aa).

Residues W177–V197 form a helical membrane-spanning segment.

Expressed only in testis.

Its subcellular location is the cytoplasm. The protein resides in the membrane. This chain is Putative transmembrane protein RNF32-DT, found in Homo sapiens (Human).